Reading from the N-terminus, the 452-residue chain is Trigger factor (452 aa).

The PPIase FKBP-type domain maps to 170-255 (GDRVTIDFTG…VKSVAAPGPL (86 aa)).

The protein belongs to the FKBP-type PPIase family. Tig subfamily.

The protein localises to the cytoplasm. The catalysed reaction is [protein]-peptidylproline (omega=180) = [protein]-peptidylproline (omega=0). Involved in protein export. Acts as a chaperone by maintaining the newly synthesized protein in an open conformation. Functions as a peptidyl-prolyl cis-trans isomerase. The sequence is that of Trigger factor from Xanthobacter autotrophicus (strain ATCC BAA-1158 / Py2).